The chain runs to 137 residues: Large ribosomal subunit protein uL16 (137 aa).

Belongs to the universal ribosomal protein uL16 family. As to quaternary structure, part of the 50S ribosomal subunit.

In terms of biological role, binds 23S rRNA and is also seen to make contacts with the A and possibly P site tRNAs. In Cereibacter sphaeroides (strain ATCC 17025 / ATH 2.4.3) (Rhodobacter sphaeroides), this protein is Large ribosomal subunit protein uL16.